The following is a 331-amino-acid chain: Olfactory receptor 7D11 (331 aa).

Residues 1 to 25 (MEIENHTLITKFLILGLSDDPELQP) lie on the Extracellular side of the membrane. N5 carries N-linked (GlcNAc...) asparagine glycosylation. A helical membrane pass occupies residues 26–46 (ILFGLFLSMYLVTLLGNLLII). Over 47 to 57 (LAVSSDSHLHK) the chain is Cytoplasmic. A helical membrane pass occupies residues 58–78 (PMYFLLSNLSFIDICFISTTI). Topologically, residues 79–97 (PKMLVNMQSQIKDISYIEC) are extracellular. C97 and C179 are oxidised to a cystine. Residues 98–118 (LTQVFFFNIFAGMDNFLLTLM) form a helical membrane-spanning segment. Residues 119 to 142 (AYDRFVAICHPLNYTVIMNPRLCA) are Cytoplasmic-facing. Residues 143–163 (LLILMFWIIMFWVSLIHVLLM) traverse the membrane as a helical segment. Over 164-196 (NELNFSRGTEIPHFFCELAQVLKVSNSDNHVNN) the chain is Extracellular. N167 is a glycosylation site (N-linked (GlcNAc...) asparagine). The helical transmembrane segment at 197–217 (VFMYVVTSLLGVIPMTGILMS) threads the bilayer. The Cytoplasmic portion of the chain corresponds to 218 to 244 (YSQIFSSLFRMSSTVSKYKAFSTCGSH). A helical membrane pass occupies residues 245–265 (LCVVTLFYGSGFGVYFSSSVV). Residues 266-271 (HSTQRR) are Extracellular-facing. Residues 272–292 (KVASLMYTVISPMLNPFIYTL) traverse the membrane as a helical segment. Residues 293–331 (RNKDVKGALGKLFNRVASSPSCINDIRNKLLLRSVRQIL) lie on the Cytoplasmic side of the membrane.

Belongs to the G-protein coupled receptor 1 family.

The protein resides in the cell membrane. In terms of biological role, possible olfactory or taste receptor. The protein is Olfactory receptor 7D11 of Mus musculus (Mouse).